The sequence spans 460 residues: Ammonium transporter Rh type B-A (460 aa).

At 1–10 the chain is on the cytoplasmic side; that stretch reads MTGYSTNMRI. Residues 11 to 31 form a helical membrane-spanning segment; that stretch reads KLPLFCLILQFITIILFAVFV. Topologically, residues 32–62 are extracellular; that stretch reads RYDHESDARGWHDELKNHSTANADNDFYFRY. A glycan (N-linked (GlcNAc...) asparagine) is linked at asparagine 48. A helical membrane pass occupies residues 63 to 83; sequence PSFQDVHVMIFIGFGFLMTFL. Residues 84–87 are Cytoplasmic-facing; it reads KRYG. A helical membrane pass occupies residues 88 to 108; the sequence is FSSVAFNFLIAAFGLQWSTLI. The Extracellular segment spans residues 109–125; the sequence is QGFFHGFHDGKIHVGIE. A helical membrane pass occupies residues 126–146; that stretch reads SMINADFCTGAVLISFGAVLG. The Cytoplasmic segment spans residues 147–150; it reads KTSP. Residues 151 to 171 form a helical membrane-spanning segment; sequence VQLIVMTLIEVTLFGINEYII. Over 172-179 the chain is Extracellular; sequence LNIVGAKD. Residues 180–202 form a helical membrane-spanning segment; sequence AGGSMTIHTFGAYFGLIVSRVLY. The Cytoplasmic segment spans residues 203–220; that stretch reads RADLDKSRQREGSVYHSD. A helical transmembrane segment spans residues 221–241; it reads LFAMIGTIYLWMFWPSFNSAV. The Extracellular segment spans residues 242 to 252; that stretch reads TAHGDDQHRTV. Residues 253 to 273 traverse the membrane as a helical segment; sequence LNTYYSLAACTLATFGFSALL. Residues 274 to 283 lie on the Cytoplasmic side of the membrane; the sequence is NGEGKLDMVH. A helical transmembrane segment spans residues 284–304; that stretch reads IQNAALAGGVAVGTSGEMMLT. Position 305 (proline 305) is a topological domain, extracellular. A helical transmembrane segment spans residues 306–326; it reads FGAMIAGTLAGIVSVLGYKYL. Residues 327 to 347 lie on the Cytoplasmic side of the membrane; sequence TPVLDSKLKIQDTCGVHNLHG. Residues 348–368 form a helical membrane-spanning segment; it reads MPGILGAVIGAIVALFATADI. Over 369 to 394 the chain is Extracellular; sequence YGDGMDDVFPMIFDGSRTAKQQSLYQ. The helical transmembrane segment at 395 to 415 threads the bilayer; it reads FLALLVALGFAIVGGTVVGFI. Topologically, residues 416–460 are cytoplasmic; it reads LKLPLFGTPSDAECFEDAVYWEVPGGEGHQQLTVVVNNEDPDTQA.

Belongs to the ammonium transporter (TC 2.A.49) family. Rh subfamily.

Its subcellular location is the basolateral cell membrane. The protein resides in the cytoplasmic vesicle membrane. In terms of biological role, functions as a specific ammonium transporter. The protein is Ammonium transporter Rh type B-A (rhbg-a) of Xenopus laevis (African clawed frog).